Consider the following 94-residue polypeptide: Defensin-7 (94 aa).

An N-terminal signal peptide occupies residues 1–19 (MRTLTLLSAFLLVALQAWA). 2 disulfide bridges follow: Cys65/Cys93 and Cys72/Cys92.

It belongs to the alpha-defensin family.

It is found in the secreted. Its function is as follows. Has antimicrobial activity. The chain is Defensin-7 (DEFA7) from Pan troglodytes (Chimpanzee).